The chain runs to 712 residues: Auxin response factor 15 (712 aa).

Residues 142-244 constitute a DNA-binding region (TF-B3); that stretch reads FCKTLTASDT…ELRLGVRRAA (103 aa).

It belongs to the ARF family. Homo and heterodimers. Expressed in roots, culms, leaves and young panicles.

The protein localises to the nucleus. Auxin response factors (ARFs) are transcriptional factors that bind specifically to the DNA sequence 5'-TGTCTC-3' found in the auxin-responsive promoter elements (AuxREs). In Oryza sativa subsp. japonica (Rice), this protein is Auxin response factor 15 (ARF15).